The chain runs to 380 residues: DNA primase small subunit PriS (380 aa).

Active-site residues include Asp-101, Asp-103, and Asp-282.

Belongs to the eukaryotic-type primase small subunit family. As to quaternary structure, heterodimer of a small subunit (PriS) and a large subunit (PriL). The cofactor is Mg(2+). Mn(2+) is required as a cofactor.

Its function is as follows. Catalytic subunit of DNA primase, an RNA polymerase that catalyzes the synthesis of short RNA molecules used as primers for DNA polymerase during DNA replication. The small subunit contains the primase catalytic core and has DNA synthesis activity on its own. Binding to the large subunit stabilizes and modulates the activity, increasing the rate of DNA synthesis while decreasing the length of the DNA fragments, and conferring RNA synthesis capability. The DNA polymerase activity may enable DNA primase to also catalyze primer extension after primer synthesis. May also play a role in DNA repair. This is DNA primase small subunit PriS from Hyperthermus butylicus (strain DSM 5456 / JCM 9403 / PLM1-5).